The primary structure comprises 396 residues: Ribosomal RNA large subunit methyltransferase I (396 aa).

The 78-residue stretch at Ser2–Phe79 folds into the PUA domain.

Belongs to the methyltransferase superfamily. RlmI family.

It is found in the cytoplasm. The catalysed reaction is cytidine(1962) in 23S rRNA + S-adenosyl-L-methionine = 5-methylcytidine(1962) in 23S rRNA + S-adenosyl-L-homocysteine + H(+). Its function is as follows. Specifically methylates the cytosine at position 1962 (m5C1962) of 23S rRNA. This is Ribosomal RNA large subunit methyltransferase I from Shewanella amazonensis (strain ATCC BAA-1098 / SB2B).